A 285-amino-acid chain; its full sequence is MINKIQGFYYVESNGQVFECKLRGILKKTNNKYNCVVGDRVEISEDNSIVEIFKRDNLLIRPIVANVDYLAIQFAAKHPNIDFERINLLLLTAFYYKIKPIVIVNKIDYLTEEELVELKEKLSFLERISVPMFLISCYQNIGLEEVENFLKDKITVIGGPSGVGKSSFINFLQSERILKTGEISERLQRGKHTTRDSNMIKMKAGGYIIDTPGFSSIEVPNIENREELISLFPEFLNIDSCKFLNCSHIHEPGCNVKKQVEENKISKERYDFYKKTLEILLERWN.

The 162-residue stretch at 56–217 (DNLLIRPIVA…IIDTPGFSSI (162 aa)) folds into the CP-type G domain. GTP-binding positions include 105–108 (NKID) and 159–167 (GPSGVGKSS). The Zn(2+) site is built by cysteine 241, cysteine 246, histidine 248, and cysteine 254.

Belongs to the TRAFAC class YlqF/YawG GTPase family. RsgA subfamily. As to quaternary structure, monomer. Associates with 30S ribosomal subunit, binds 16S rRNA. Zn(2+) serves as cofactor.

It localises to the cytoplasm. One of several proteins that assist in the late maturation steps of the functional core of the 30S ribosomal subunit. Helps release RbfA from mature subunits. May play a role in the assembly of ribosomal proteins into the subunit. Circularly permuted GTPase that catalyzes slow GTP hydrolysis, GTPase activity is stimulated by the 30S ribosomal subunit. The chain is Small ribosomal subunit biogenesis GTPase RsgA from Fusobacterium nucleatum subsp. nucleatum (strain ATCC 25586 / DSM 15643 / BCRC 10681 / CIP 101130 / JCM 8532 / KCTC 2640 / LMG 13131 / VPI 4355).